The primary structure comprises 192 residues: Adenylate kinase (192 aa).

10–15 (GSGKGT) is a binding site for ATP. Residues 30–59 (STGDMLREVISRETEVGRKAKAIINAGALV) form an NMP region. Residues Thr-31, Arg-36, 57–59 (ALV), 85–88 (GYPR), and Gln-92 contribute to the AMP site. An LID region spans residues 126-142 (KRVQETIAVGGQVRSDD). ATP is bound at residue Arg-127. The AMP site is built by Arg-139 and Arg-150. Met-178 serves as a coordination point for ATP.

This sequence belongs to the adenylate kinase family. In terms of assembly, monomer.

The protein resides in the cytoplasm. The catalysed reaction is AMP + ATP = 2 ADP. It participates in purine metabolism; AMP biosynthesis via salvage pathway; AMP from ADP: step 1/1. Functionally, catalyzes the reversible transfer of the terminal phosphate group between ATP and AMP. Plays an important role in cellular energy homeostasis and in adenine nucleotide metabolism. This is Adenylate kinase from Bartonella quintana (strain Toulouse) (Rochalimaea quintana).